An 892-amino-acid polypeptide reads, in one-letter code: Alanine--tRNA ligase (892 aa).

The Zn(2+) site is built by histidine 593, histidine 597, cysteine 694, and histidine 698.

This sequence belongs to the class-II aminoacyl-tRNA synthetase family. It depends on Zn(2+) as a cofactor.

Its subcellular location is the cytoplasm. It catalyses the reaction tRNA(Ala) + L-alanine + ATP = L-alanyl-tRNA(Ala) + AMP + diphosphate. In terms of biological role, catalyzes the attachment of alanine to tRNA(Ala) in a two-step reaction: alanine is first activated by ATP to form Ala-AMP and then transferred to the acceptor end of tRNA(Ala). Also edits incorrectly charged Ser-tRNA(Ala) and Gly-tRNA(Ala) via its editing domain. The sequence is that of Alanine--tRNA ligase from Helicobacter hepaticus (strain ATCC 51449 / 3B1).